We begin with the raw amino-acid sequence, 670 residues long: Transketolase, plasmid (670 aa).

Residue His-32 participates in substrate binding. Thiamine diphosphate contacts are provided by residues His-72 and 120–122 (GPL). Position 161 (Asp-161) interacts with Mg(2+). Residues Gly-162 and Asn-191 each contribute to the thiamine diphosphate site. The Mg(2+) site is built by Asn-191 and Ile-193. His-267, Arg-364, and Ser-391 together coordinate substrate. A thiamine diphosphate-binding site is contributed by His-267. The active-site Proton donor is the Glu-417. Residue Phe-443 coordinates thiamine diphosphate. Substrate contacts are provided by His-467, Asp-475, and Arg-526.

It belongs to the transketolase family. Homodimer. Requires Mg(2+) as cofactor. It depends on Ca(2+) as a cofactor. Mn(2+) is required as a cofactor. Co(2+) serves as cofactor. The cofactor is thiamine diphosphate.

It carries out the reaction D-sedoheptulose 7-phosphate + D-glyceraldehyde 3-phosphate = aldehydo-D-ribose 5-phosphate + D-xylulose 5-phosphate. Its pathway is carbohydrate biosynthesis; Calvin cycle. In terms of biological role, catalyzes the transfer of a two-carbon ketol group from a ketose donor to an aldose acceptor, via a covalent intermediate with the cofactor thiamine pyrophosphate. The protein is Transketolase, plasmid (cbbTP) of Cupriavidus necator (strain ATCC 17699 / DSM 428 / KCTC 22496 / NCIMB 10442 / H16 / Stanier 337) (Ralstonia eutropha).